The primary structure comprises 387 residues: Ferrochelatase (387 aa).

Fe cation is bound by residues histidine 196 and glutamate 277.

The protein belongs to the ferrochelatase family.

It is found in the cytoplasm. The catalysed reaction is heme b + 2 H(+) = protoporphyrin IX + Fe(2+). Its pathway is porphyrin-containing compound metabolism; protoheme biosynthesis; protoheme from protoporphyrin-IX: step 1/1. Catalyzes the ferrous insertion into protoporphyrin IX. The polypeptide is Ferrochelatase (Gloeothece citriformis (strain PCC 7424) (Cyanothece sp. (strain PCC 7424))).